A 425-amino-acid chain; its full sequence is Glutamyl-tRNA reductase (425 aa).

Substrate-binding positions include 49–52 (TCNR), serine 109, 114–116 (EGQ), and glutamine 120. Cysteine 50 functions as the Nucleophile in the catalytic mechanism. Residue 189-194 (GAGKMS) coordinates NADP(+).

This sequence belongs to the glutamyl-tRNA reductase family. Homodimer.

It carries out the reaction (S)-4-amino-5-oxopentanoate + tRNA(Glu) + NADP(+) = L-glutamyl-tRNA(Glu) + NADPH + H(+). The protein operates within porphyrin-containing compound metabolism; protoporphyrin-IX biosynthesis; 5-aminolevulinate from L-glutamyl-tRNA(Glu): step 1/2. It functions in the pathway porphyrin-containing compound metabolism; chlorophyll biosynthesis. In terms of biological role, catalyzes the NADPH-dependent reduction of glutamyl-tRNA(Glu) to glutamate 1-semialdehyde (GSA). The sequence is that of Glutamyl-tRNA reductase from Picosynechococcus sp. (strain ATCC 27264 / PCC 7002 / PR-6) (Agmenellum quadruplicatum).